The following is a 610-amino-acid chain: uncharacterized protein (610 aa).

Positions 1 to 28 (MDSPSTSESPLKKNTIQDFGESNMTESP) are enriched in polar residues. Residues 1-36 (MDSPSTSESPLKKNTIQDFGESNMTESPQSKEEIDE) form a disordered region. The RING-type zinc-finger motif lies at 41-82 (CSVCKNEIIDTTSLSDCCHEFCYDCIVGWLTKGSGPFCPMCK). 2 disordered regions span residues 390 to 411 (YRGQPQAPLRLGPNATNPFRPA) and 431 to 515 (TSSA…SADR). Residues 432-447 (SSAGAGSARSRGSDSV) show a composition bias toward low complexity. Acidic residues-rich tracts occupy residues 448 to 470 (VEIDDDDDNDGVDVDDDDREDSD) and 478 to 487 (SEEDSDEEIQ).

This is an uncharacterized protein from Caenorhabditis elegans.